Consider the following 20-residue polypeptide: Outer membrane protein 40Va (20 aa).

The protein belongs to the Gram-negative porin family. Homotrimer.

The protein resides in the cell outer membrane. Functionally, forms pores that allow passive diffusion of small molecules across the outer membrane. In Vibrio alginolyticus, this protein is Outer membrane protein 40Va.